Reading from the N-terminus, the 169-residue chain is Putative prolyl-tRNA synthetase associated domain-containing protein 1 (169 aa).

Belongs to the PRORSD1 family.

This Homo sapiens (Human) protein is Putative prolyl-tRNA synthetase associated domain-containing protein 1 (PRORSD1P).